The following is a 459-amino-acid chain: tRNA-guanine(15) transglycosylase (459 aa).

Asp-90 (nucleophile) is an active-site residue. Positions 125 and 192 each coordinate substrate. Zn(2+) is bound by residues Cys-275, Cys-277, and Cys-280.

The protein belongs to the archaeosine tRNA-ribosyltransferase family. Requires Zn(2+) as cofactor.

The catalysed reaction is guanosine(15) in tRNA + 7-cyano-7-deazaguanine = 7-cyano-7-carbaguanosine(15) in tRNA + guanine. The protein operates within tRNA modification; archaeosine-tRNA biosynthesis. Functionally, exchanges the guanine residue with 7-cyano-7-deazaguanine (preQ0) at position 15 in the dihydrouridine loop (D-loop) of archaeal tRNAs. This chain is tRNA-guanine(15) transglycosylase, found in Methanopyrus kandleri (strain AV19 / DSM 6324 / JCM 9639 / NBRC 100938).